A 569-amino-acid polypeptide reads, in one-letter code: Sugar transporter STL1 (569 aa).

The Cytoplasmic portion of the chain corresponds to 1 to 29 (MKDLKLSNFKGKFISRTSHWGLTGKKLRY). A helical membrane pass occupies residues 30 to 50 (FITIASMTGFSLFGYDQGLMA). At 51–79 (SLITGKQFNYEFPATKENGDHDRHATVVQ) the chain is on the extracellular side. Residues 80 to 100 (GATTSCYELGCFAGSLFVMFC) traverse the membrane as a helical segment. Residues 101–107 (GERIGRK) are Cytoplasmic-facing. The helical transmembrane segment at 108-128 (PLILMGSVITIIGAVISTCAF) threads the bilayer. R129 is a topological domain (extracellular). A helical transmembrane segment spans residues 130 to 150 (GYWALGQFIIGRVVTGVGTGL). Over 151–168 (NTSTIPVWQSEMSKAENR) the chain is Cytoplasmic. The chain crosses the membrane as a helical span at residues 169 to 189 (GLLVNLEGSTIAFGTMIAYWI). The Extracellular segment spans residues 190–203 (DFGLSYTNSSVQWR). Residue N197 is glycosylated (N-linked (GlcNAc...) asparagine). The helical transmembrane segment at 204 to 224 (FPVSMQIVFALFLLAFMIKLP) threads the bilayer. Topologically, residues 225 to 291 (ESPRWLISQS…SRGRSQNLQR (67 aa)) are cytoplasmic. A helical membrane pass occupies residues 292 to 312 (ALIAASTQFFQQFTGCNAAIY). Topologically, residues 313–330 (YSTVLFNKTIKLDYRLSM) are extracellular. N319 is a glycosylation site (N-linked (GlcNAc...) asparagine). A helical membrane pass occupies residues 331–351 (IIGGVFATIYALSTIGSFFLI). At 352 to 358 (EKLGRRK) the chain is on the cytoplasmic side. The chain crosses the membrane as a helical span at residues 359-379 (LFLLGATGQAVSFTITFACLV). The Extracellular segment spans residues 380-389 (KENKENARGA). Residues 390–410 (AVGLFLFITFFGLSLLSLPWI) traverse the membrane as a helical segment. The Cytoplasmic segment spans residues 411 to 426 (YPPEIASMKVRASTNA). A helical membrane pass occupies residues 427 to 447 (FSTCTNWLCNFAVVMFTPIFI). Residues 448 to 453 (GQSGWG) lie on the Extracellular side of the membrane. Residues 454–474 (CYLFFAVMNYLYIPVIFFFYP) form a helical membrane-spanning segment. Topologically, residues 475–569 (ETAGRSLEEI…TVNDKANFEG (95 aa)) are cytoplasmic. Residues 524–533 (DDEMEKEDFG) are compositionally biased toward acidic residues. The tract at residues 524 to 569 (DDEMEKEDFGEDRVEDTYNQINGDNSSSSSNIKNEDTVNDKANFEG) is disordered. Basic and acidic residues predominate over residues 556-569 (KNEDTVNDKANFEG).

Belongs to the major facilitator superfamily. Sugar transporter (TC 2.A.1.1) family.

The protein resides in the membrane. In Saccharomyces cerevisiae (strain ATCC 204508 / S288c) (Baker's yeast), this protein is Sugar transporter STL1 (STL1).